A 633-amino-acid chain; its full sequence is DNA mismatch repair protein MutL (633 aa).

Belongs to the DNA mismatch repair MutL/HexB family.

Its function is as follows. This protein is involved in the repair of mismatches in DNA. It is required for dam-dependent methyl-directed DNA mismatch repair. May act as a 'molecular matchmaker', a protein that promotes the formation of a stable complex between two or more DNA-binding proteins in an ATP-dependent manner without itself being part of a final effector complex. This Pseudomonas fluorescens (strain SBW25) protein is DNA mismatch repair protein MutL.